We begin with the raw amino-acid sequence, 438 residues long: sn-glycerol-3-phosphate-binding periplasmic protein UgpB (438 aa).

Residues 1-23 (MKPLHYTASALALGLALMGNAQA) form the signal peptide. The sn-glycerol 3-phosphate site is built by tyrosine 65, glutamate 89, serine 144, serine 270, glycine 307, tyrosine 346, and arginine 397.

Belongs to the bacterial solute-binding protein 1 family. The complex is composed of two ATP-binding proteins (UgpC), two transmembrane proteins (UgpA and UgpE) and a solute-binding protein (UgpB).

Its subcellular location is the periplasm. Its function is as follows. Part of the ABC transporter complex UgpBAEC involved in sn-glycerol-3-phosphate (G3P) import. Binds G3P. The sequence is that of sn-glycerol-3-phosphate-binding periplasmic protein UgpB (ugpB) from Shigella flexneri serotype 5b (strain 8401).